A 225-amino-acid chain; its full sequence is Cytochrome c oxidase subunit 2 (225 aa).

At 1–25 (MSTWMMFMFQESNSLYADNLVSFHN) the chain is on the mitochondrial intermembrane side. A helical membrane pass occupies residues 26 to 47 (MVMIIVIMISTLTVYIIFDLFL). Topologically, residues 48–62 (NKFSNLYLLKNHNIE) are mitochondrial matrix. Residues 63–82 (IIWMIVPIVILLIICFPSLK) form a helical membrane-spanning segment. Topologically, residues 83–225 (ILYLIDEIVN…YFMNWIYKMN (143 aa)) are mitochondrial intermembrane. His-159, Cys-194, Glu-196, Cys-198, His-202, and Met-205 together coordinate Cu cation. Position 196 (Glu-196) interacts with Mg(2+).

It belongs to the cytochrome c oxidase subunit 2 family. As to quaternary structure, component of the cytochrome c oxidase (complex IV, CIV), a multisubunit enzyme composed of a catalytic core of 3 subunits and several supernumerary subunits. The complex exists as a monomer or a dimer and forms supercomplexes (SCs) in the inner mitochondrial membrane with ubiquinol-cytochrome c oxidoreductase (cytochrome b-c1 complex, complex III, CIII). Cu cation serves as cofactor.

The protein resides in the mitochondrion inner membrane. It carries out the reaction 4 Fe(II)-[cytochrome c] + O2 + 8 H(+)(in) = 4 Fe(III)-[cytochrome c] + 2 H2O + 4 H(+)(out). Functionally, component of the cytochrome c oxidase, the last enzyme in the mitochondrial electron transport chain which drives oxidative phosphorylation. The respiratory chain contains 3 multisubunit complexes succinate dehydrogenase (complex II, CII), ubiquinol-cytochrome c oxidoreductase (cytochrome b-c1 complex, complex III, CIII) and cytochrome c oxidase (complex IV, CIV), that cooperate to transfer electrons derived from NADH and succinate to molecular oxygen, creating an electrochemical gradient over the inner membrane that drives transmembrane transport and the ATP synthase. Cytochrome c oxidase is the component of the respiratory chain that catalyzes the reduction of oxygen to water. Electrons originating from reduced cytochrome c in the intermembrane space (IMS) are transferred via the dinuclear copper A center (CU(A)) of subunit 2 and heme A of subunit 1 to the active site in subunit 1, a binuclear center (BNC) formed by heme A3 and copper B (CU(B)). The BNC reduces molecular oxygen to 2 water molecules using 4 electrons from cytochrome c in the IMS and 4 protons from the mitochondrial matrix. The protein is Cytochrome c oxidase subunit 2 (COII) of Apis florea (Dwarf honeybee).